The following is a 705-amino-acid chain: Beta-xylosidase (705 aa).

The protein belongs to the glycosyl hydrolase 52 family.

It carries out the reaction Hydrolysis of (1-&gt;4)-beta-D-xylans, to remove successive D-xylose residues from the non-reducing termini.. It functions in the pathway glycan degradation; xylan degradation. This Geobacillus stearothermophilus (Bacillus stearothermophilus) protein is Beta-xylosidase (xylA).